Consider the following 246-residue polypeptide: tRNA pseudouridine synthase A (246 aa).

Asp-53 acts as the Nucleophile in catalysis. Tyr-111 lines the substrate pocket.

Belongs to the tRNA pseudouridine synthase TruA family. As to quaternary structure, homodimer.

The catalysed reaction is uridine(38/39/40) in tRNA = pseudouridine(38/39/40) in tRNA. Formation of pseudouridine at positions 38, 39 and 40 in the anticodon stem and loop of transfer RNAs. This is tRNA pseudouridine synthase A from Lysinibacillus sphaericus (strain C3-41).